Here is a 323-residue protein sequence, read N- to C-terminus: MTRYDSLLQALGNTPLVGLQRLSPRWDDGRDGPHVRLWAKLEDRNPTGSIKDRPAVRMIEQAEADGLLRPGATILEPTSGNTGISLAMAARLKGYRLICVMPENTSVERRQLLELYGAQIIFSAAEGGSNTAVATAKELAATNPSWVMLYQYGNPANTDSHYCGTGPELLADLPEITHFVAGLGTTGTLMGTGRFLREHVANVKIVAAEPRYGEGVYALRNMDEGFVPELYDPEILTARYSVGAVDAVRRTRELVHTEGIFAGISTGAVLHAALGVGAGALAAGERADIALVVADAGWKYLSTGAYAGSLDDAETALEGQLWA.

The residue at position 51 (Lys51) is an N6-(pyridoxal phosphate)lysine. Residues Asn81 and 184–188 (GTTGT) contribute to the pyridoxal 5'-phosphate site. Position 220 (Arg220) interacts with substrate. Position 265 (Ser265) interacts with pyridoxal 5'-phosphate.

Belongs to the cysteine synthase/cystathionine beta-synthase family. In terms of assembly, homodimer. The cofactor is pyridoxal 5'-phosphate.

It carries out the reaction [CysO sulfur-carrier protein]-C-terminal-Gly-aminoethanethioate + O-phospho-L-serine + H(+) = [CysO sulfur-carrier protein]-Gly-NH-CH2-C(O)-S-L-Cys + phosphate. It functions in the pathway amino-acid biosynthesis; L-cysteine biosynthesis. Its function is as follows. Catalyzes the formation of a covalent CysO-cysteine adduct via a sulfur transfer, using the thiocarboxylated sulfur carrier protein CysO-COSH as sulfur donor and O-phospho-L-serine (OPS) as sulfur acceptor. Can also use sodium sulfide as sulfur donor in vitro, albeit with less efficiency. The chain is O-phosphoserine sulfhydrylase (cysM) from Mycobacterium bovis (strain ATCC BAA-935 / AF2122/97).